The sequence spans 468 residues: Ubiquinone biosynthesis monooxygenase COQ6, mitochondrial (468 aa).

The N-terminal 28 residues, 1–28 (MAARLVSRCGAVRAAPHSGPLVSWRRWS), are a transit peptide targeting the mitochondrion.

It belongs to the UbiH/COQ6 family. In terms of assembly, component of a multi-subunit COQ enzyme complex, composed of at least COQ3, COQ4, COQ5, COQ6, COQ7 and COQ9. Interacts with COQ8B and COQ7. FAD is required as a cofactor. In terms of tissue distribution, widely expressed.

It is found in the mitochondrion inner membrane. It localises to the golgi apparatus. The protein resides in the cell projection. The enzyme catalyses 4-hydroxy-3-(all-trans-decaprenyl)benzoate + 2 reduced [2Fe-2S]-[ferredoxin] + O2 + 2 H(+) = 3,4-dihydroxy-5-(all-trans-decaprenyl)benzoate + 2 oxidized [2Fe-2S]-[ferredoxin] + H2O. It catalyses the reaction 2-methoxy-6-(all-trans-decaprenyl)phenol + 2 reduced [2Fe-2S]-[ferredoxin] + O2 + 2 H(+) = 2-methoxy-6-(all-trans-decaprenyl)benzene-1,4-diol + 2 oxidized [2Fe-2S]-[ferredoxin] + H2O. Its pathway is cofactor biosynthesis; ubiquinone biosynthesis. Functionally, FAD-dependent monooxygenase required for two non-consecutive steps during ubiquinone biosynthesis. Required for the C5-ring hydroxylation during ubiquinone biosynthesis by catalyzing the hydroxylation of 4-hydroxy-3-(all-trans-decaprenyl)benzoic acid to 3,4-dihydroxy-5-(all-trans-decaprenyl)benzoic acid. Also acts downstream of COQ4, for the C1-hydroxylation during ubiquinone biosynthesis by catalyzing the hydroxylation of 2-methoxy-6-(all-trans-decaprenyl)phenol to 2-methoxy-6-(all-trans-decaprenyl)benzene-1,4-diol. The electrons required for the hydroxylation reaction are funneled indirectly to COQ6 from NADPH via a ferredoxin/ferredoxin reductase system composed of FDX2 and FDXR. This chain is Ubiquinone biosynthesis monooxygenase COQ6, mitochondrial, found in Homo sapiens (Human).